Consider the following 391-residue polypeptide: Alkanesulfonate monooxygenase (391 aa).

It belongs to the SsuD family.

The catalysed reaction is an alkanesulfonate + FMNH2 + O2 = an aldehyde + FMN + sulfite + H2O + 2 H(+). Catalyzes the desulfonation of aliphatic sulfonates. This is Alkanesulfonate monooxygenase from Paracidovorax citrulli (strain AAC00-1) (Acidovorax citrulli).